The primary structure comprises 73 residues: Putative antimicrobial peptide clone 5 (73 aa).

The first 22 residues, 1 to 22 (MQIKHLITLFFLVLIGADQCSA), serve as a signal peptide directing secretion. Residues 45-73 (EVSPQIDQYRNFQKREAELEELLDRLPMY) constitute a propeptide that is removed on maturation.

It belongs to the non-disulfide-bridged peptide (NDBP) superfamily. Short antimicrobial peptide (group 4) family. As to expression, expressed by the venom gland.

The protein resides in the secreted. In terms of biological role, antibacterial peptide. The sequence is that of Putative antimicrobial peptide clone 5 from Tityus costatus (Brazilian scorpion).